Consider the following 93-residue polypeptide: Large ribosomal subunit protein eL31 (93 aa).

Belongs to the eukaryotic ribosomal protein eL31 family.

This chain is Large ribosomal subunit protein eL31, found in Methanosarcina mazei (strain ATCC BAA-159 / DSM 3647 / Goe1 / Go1 / JCM 11833 / OCM 88) (Methanosarcina frisia).